The following is a 242-amino-acid chain: 1-(5-phosphoribosyl)-5-[(5-phosphoribosylamino)methylideneamino] imidazole-4-carboxamide isomerase (242 aa).

The active-site Proton acceptor is Asp8. Asp129 acts as the Proton donor in catalysis.

Belongs to the HisA/HisF family.

It localises to the cytoplasm. The enzyme catalyses 1-(5-phospho-beta-D-ribosyl)-5-[(5-phospho-beta-D-ribosylamino)methylideneamino]imidazole-4-carboxamide = 5-[(5-phospho-1-deoxy-D-ribulos-1-ylimino)methylamino]-1-(5-phospho-beta-D-ribosyl)imidazole-4-carboxamide. It functions in the pathway amino-acid biosynthesis; L-histidine biosynthesis; L-histidine from 5-phospho-alpha-D-ribose 1-diphosphate: step 4/9. The chain is 1-(5-phosphoribosyl)-5-[(5-phosphoribosylamino)methylideneamino] imidazole-4-carboxamide isomerase from Beijerinckia indica subsp. indica (strain ATCC 9039 / DSM 1715 / NCIMB 8712).